A 141-amino-acid polypeptide reads, in one-letter code: UPF0225 protein Rmet_0111 (141 aa).

Belongs to the UPF0225 family.

The polypeptide is UPF0225 protein Rmet_0111 (Cupriavidus metallidurans (strain ATCC 43123 / DSM 2839 / NBRC 102507 / CH34) (Ralstonia metallidurans)).